Here is an 88-residue protein sequence, read N- to C-terminus: Small ribosomal subunit protein uS15 (88 aa).

This sequence belongs to the universal ribosomal protein uS15 family. Part of the 30S ribosomal subunit. Forms a bridge to the 50S subunit in the 70S ribosome, contacting the 23S rRNA.

Functionally, one of the primary rRNA binding proteins, it binds directly to 16S rRNA where it helps nucleate assembly of the platform of the 30S subunit by binding and bridging several RNA helices of the 16S rRNA. In terms of biological role, forms an intersubunit bridge (bridge B4) with the 23S rRNA of the 50S subunit in the ribosome. This Mycoplasmopsis synoviae (strain 53) (Mycoplasma synoviae) protein is Small ribosomal subunit protein uS15.